The chain runs to 350 residues: ADP-ribosylhydrolase ARH3 (350 aa).

The Mg(2+) site is built by Glu-27, Thr-57, Asp-58, and Asp-59. Asp-58 contacts substrate. Substrate contacts are provided by residues 127-133 (KGSYGNG), His-163, Leu-216, and Ile-252. Mg(2+) contacts are provided by Asp-295, Asp-297, and Thr-298.

It belongs to the ADP-ribosylglycohydrolase family. As to quaternary structure, monomer. Mg(2+) is required as a cofactor.

The protein localises to the nucleus. Its subcellular location is the cytoplasm. It is found in the chromosome. It localises to the mitochondrion matrix. It carries out the reaction [(1''-&gt;2')-ADP-alpha-D-ribose](n) + H2O = [(1''-&gt;2')-ADP-alpha-D-ribose](n-1) + ADP-D-ribose. It catalyses the reaction 1''-O-acetyl-ADP-alpha-D-ribose + H2O = ADP-D-ribose + acetate + H(+). The enzyme catalyses O-(ADP-D-ribosyl)-L-seryl-[protein] + H2O = ADP-D-ribose + L-seryl-[protein]. The catalysed reaction is alpha-NAD(+) + H2O = ADP-D-ribose + nicotinamide + H(+). With respect to regulation, the protein undergoes a dramatic conformational switch from closed to open states upon substrate-binding, which enables specific substrate recognition for the 1''-O-linkage. The glutamate flap (Glu-27) blocks substrate entrance to Mg(2+) in the unliganded closed state. In presence of substrate, Glu-27 is ejected from the active site: this closed-to-open transition significantly widens the substrate-binding channel and precisely positions the scissile 1''-O-linkage for cleavage while securing tightly 2'- and 3'-hydroxyls of ADP-ribose. Its function is as follows. ADP-ribosylhydrolase that preferentially hydrolyzes the scissile alpha-O-linkage attached to the anomeric C1'' position of ADP-ribose and acts on different substrates, such as proteins ADP-ribosylated on serine and threonine, free poly(ADP-ribose) and O-acetyl-ADP-D-ribose. Specifically acts as a serine mono-ADP-ribosylhydrolase by mediating the removal of mono-ADP-ribose attached to serine residues on proteins, thereby playing a key role in DNA damage response. Serine ADP-ribosylation of proteins constitutes the primary form of ADP-ribosylation of proteins in response to DNA damage. Does not hydrolyze ADP-ribosyl-arginine, -cysteine, -diphthamide, or -asparagine bonds. Also able to degrade protein free poly(ADP-ribose), which is synthesized in response to DNA damage: free poly(ADP-ribose) acts as a potent cell death signal and its degradation by ADPRHL2 protects cells from poly(ADP-ribose)-dependent cell death, a process named parthanatos. Also hydrolyzes free poly(ADP-ribose) in mitochondria. Specifically digests O-acetyl-ADP-D-ribose, a product of deacetylation reactions catalyzed by sirtuins. Specifically degrades 1''-O-acetyl-ADP-D-ribose isomer, rather than 2''-O-acetyl-ADP-D-ribose or 3''-O-acetyl-ADP-D-ribose isomers. The protein is ADP-ribosylhydrolase ARH3 (adprs) of Xenopus tropicalis (Western clawed frog).